A 596-amino-acid chain; its full sequence is CRISPR-associated DNA-binding protein Cas12m (596 aa).

A recognition domain (REC1-N) region spans residues 19–53 (EVLRQQLWLAHNLREDLVSLQLAYDDDLKAIWSSY). The interval 54-121 (PDVAQAEDTM…RDAIAVVKDD (68 aa)) is recognition domain (REC2). Coiled coils occupy residues 55–83 (DVAQ…ARIE) and 91–117 (TELT…AIAV). The recognition domain (REC1-C) stretch occupies residues 122–190 (AAERRKARSD…LRHHRFDGSG (69 aa)). Residues 191 to 302 (TIAVQLQRQA…RAKLCVTARI (112 aa)) are wedge domain (WED). The tract at residues 303–313 (GDTEPVTSGPT) is linker. A ruvC-I region spans residues 314-541 (VALHLGWRST…RDGVPVTIVA (228 aa)). H317 is a Mg(2+) binding site. The tract at residues 541–577 (AAADFTRTHSRCGHVNPADDRYLSNPVRCDGCGAMYD) is target nucleic-acid binding (TNB). Zn(2+)-binding residues include H549, C552, C569, and C572. Residues 578-596 (QDRSFVTLMLRAATAPSNP) form a ruvC-II region. D579 lines the Mg(2+) pocket.

It belongs to the CRISPR-associated DNA-binding protein Cas12m family. Binds crRNA and target dsDNA as a monomer. Mg(2+) is required as a cofactor. Zn(2+) serves as cofactor.

Its function is as follows. CRISPR (clustered regularly interspaced short palindromic repeat), is an adaptive immune system that provides protection against mobile genetic elements (viruses, transposable elements and conjugative plasmids). CRISPR clusters contain sequences complementary to antecedent mobile elements and target invading nucleic acids. CRISPR clusters are transcribed and processed into CRISPR RNA (crRNA). Recognizes a short motif in the CRISPR repeat sequences (the 5' PAM or protospacer adjacent motif, 5'-TTN-3' in this organism) to help distinguish self versus nonself, as targets within the bacterial CRISPR locus do not have PAMs. Upon expression in E.coli as a CRISPR locus inhibits plasmid propagation when targeted to regions essential for plasmid propagation (replication origin and dnaA). The crRNA-Cas12m complex inhibits transcription from target DNA leading to gene silencing. Cas12m-crRNA binds DNA in a PAM-dependent, crRNA-guided fashion. Binds a 17-bp crRNA-ss-target DNA heteroduplex, in a 56 nucleotide crRNA. No dsDNA, ssDNA or RNA nuclease activity is seen for the crRNA-Cas12m complex. Is required to process pre-crRNA to mature crRNA without a tracrRNA. Upon expression in E.coli as a CRISPR region preferentially binds to its associated crRNA. The chain is CRISPR-associated DNA-binding protein Cas12m from Mycolicibacterium mucogenicum (Mycobacterium mucogenicum).